The primary structure comprises 335 residues: Galactosylgalactosylxylosylprotein 3-beta-glucuronosyltransferase 3 (335 aa).

Residues 1–7 are Cytoplasmic-facing; that stretch reads MKLKLKN. A helical; Signal-anchor for type II membrane protein transmembrane segment spans residues 8 to 28; the sequence is VFLAYFLVSIAGLLYALVQLG. The Lumenal segment spans residues 29–335; that stretch reads QPCDCLPPLR…GQGSDPAIEV (307 aa). Residue Asp-196 coordinates Mn(2+). Catalysis depends on Glu-281, which acts as the Proton acceptor. Residue Asn-300 is glycosylated (N-linked (GlcNAc...) asparagine). Residues 312 to 322 are compositionally biased toward basic and acidic residues; that stretch reads EKPKMKQEEQL. Residues 312 to 335 are disordered; the sequence is EKPKMKQEEQLQRQGQGSDPAIEV.

This sequence belongs to the glycosyltransferase 43 family. As to quaternary structure, homodimer; disulfide-linked. Interacts with PXYLP1; the interaction increases the 2-phosphoxylose phosphatase activity of PXYLP1 during completion of linkage region formation in a B3GAT3-mediated manner. The cofactor is Mn(2+). In terms of processing, N-glycosylated. In terms of tissue distribution, liver, brain and heart. Moderate expression seen in lung, skeletal muscle, kidney and testis.

It localises to the golgi apparatus membrane. The protein resides in the golgi apparatus. It is found in the cis-Golgi network. The catalysed reaction is 3-O-(beta-D-galactosyl-(1-&gt;3)-beta-D-galactosyl-(1-&gt;4)-beta-D-xylosyl)-L-seryl-[protein] + UDP-alpha-D-glucuronate = 3-O-(beta-D-GlcA-(1-&gt;3)-beta-D-Gal-(1-&gt;3)-beta-D-Gal-(1-&gt;4)-beta-D-Xyl)-L-seryl-[protein] + UDP + H(+). The protein operates within protein modification; protein glycosylation. Functionally, glycosaminoglycans biosynthesis. Involved in forming the linkage tetrasaccharide present in heparan sulfate and chondroitin sulfate. Transfers a glucuronic acid moiety from the uridine diphosphate-glucuronic acid (UDP-GlcUA) to the common linkage region trisaccharide Gal-beta-1,3-Gal-beta-1,4-Xyl covalently bound to a Ser residue at the glycosaminylglycan attachment site of proteoglycans. Can also play a role in the biosynthesis of l2/HNK-1 carbohydrate epitope on glycoproteins. Highest activity seen with Gal-beta-1,3-Gal-beta-O-R (where R=naphthalenemethanol or benzyl alcohol). Stimulates 2-phosphoxylose phosphatase activity of PXYLP1 in presence of uridine diphosphate-glucuronic acid (UDP-GlcUA) during completion of linkage region formation. This is Galactosylgalactosylxylosylprotein 3-beta-glucuronosyltransferase 3 (B3GAT3) from Cricetulus griseus (Chinese hamster).